Here is a 311-residue protein sequence, read N- to C-terminus: Pyrimidine-specific ribonucleoside hydrolase RihA (311 aa).

H240 is a catalytic residue.

This sequence belongs to the IUNH family. RihA subfamily.

In terms of biological role, hydrolyzes with equal efficiency cytidine or uridine to ribose and cytosine or uracil, respectively. This is Pyrimidine-specific ribonucleoside hydrolase RihA from Escherichia coli (strain K12 / MC4100 / BW2952).